A 386-amino-acid polypeptide reads, in one-letter code: Succinate--CoA ligase [ADP-forming] subunit beta (386 aa).

The ATP-grasp domain occupies 9 to 244 (KEILKQYGVK…LDEEDEKEIE (236 aa)). Residues Lys-46, 53–55 (GRG), Glu-99, Cys-102, and Glu-107 contribute to the ATP site. Residues Asn-199 and Asp-213 each coordinate Mg(2+). Substrate-binding positions include Asn-264 and 321–323 (GIM).

It belongs to the succinate/malate CoA ligase beta subunit family. Heterotetramer of two alpha and two beta subunits. It depends on Mg(2+) as a cofactor.

It carries out the reaction succinate + ATP + CoA = succinyl-CoA + ADP + phosphate. The catalysed reaction is GTP + succinate + CoA = succinyl-CoA + GDP + phosphate. The protein operates within carbohydrate metabolism; tricarboxylic acid cycle; succinate from succinyl-CoA (ligase route): step 1/1. Its function is as follows. Succinyl-CoA synthetase functions in the citric acid cycle (TCA), coupling the hydrolysis of succinyl-CoA to the synthesis of either ATP or GTP and thus represents the only step of substrate-level phosphorylation in the TCA. The beta subunit provides nucleotide specificity of the enzyme and binds the substrate succinate, while the binding sites for coenzyme A and phosphate are found in the alpha subunit. The protein is Succinate--CoA ligase [ADP-forming] subunit beta of Brevibacillus brevis (strain 47 / JCM 6285 / NBRC 100599).